We begin with the raw amino-acid sequence, 151 residues long: MDNIVDSLNKAYEKFVLASAGVLESKESAGGQKALLTDTALENFKEKWELFRVACDQAEEFVESVKQRIGSECLVDEATGLTTTAAGGQAPAAVTGAATSLPPISAVRLEQMSRAVRWLVLELQRGSGVAPGSVHSSSTGFDSRFSEDSTQ.

The tract at residues Gly128 to Gln151 is disordered.

Belongs to the mediator complex subunit 32 family. Oligomers. Component of the Mediator complex. Interacts with MED6. Interacts with GEBPL.

The protein localises to the nucleus. Its function is as follows. Component of the Mediator complex, a coactivator involved in the regulated transcription of nearly all RNA polymerase II-dependent genes. Mediator functions as a bridge to convey information from gene-specific regulatory proteins to the basal RNA polymerase II transcription machinery. The Mediator complex, having a compact conformation in its free form, is recruited to promoters by direct interactions with regulatory proteins and serves for the assembly of a functional pre-initiation complex with RNA polymerase II and the general transcription factors. In Arabidopsis thaliana (Mouse-ear cress), this protein is Mediator of RNA polymerase II transcription subunit 32 (MED32).